The following is a 287-amino-acid chain: Bifunctional protein FolD (287 aa).

NADP(+) contacts are provided by residues glycine 160–serine 162, serine 189, and threonine 230.

It belongs to the tetrahydrofolate dehydrogenase/cyclohydrolase family. In terms of assembly, homodimer.

It carries out the reaction (6R)-5,10-methylene-5,6,7,8-tetrahydrofolate + NADP(+) = (6R)-5,10-methenyltetrahydrofolate + NADPH. It catalyses the reaction (6R)-5,10-methenyltetrahydrofolate + H2O = (6R)-10-formyltetrahydrofolate + H(+). It participates in one-carbon metabolism; tetrahydrofolate interconversion. Its function is as follows. Catalyzes the oxidation of 5,10-methylenetetrahydrofolate to 5,10-methenyltetrahydrofolate and then the hydrolysis of 5,10-methenyltetrahydrofolate to 10-formyltetrahydrofolate. This is Bifunctional protein FolD from Chlamydia muridarum (strain MoPn / Nigg).